Here is a 512-residue protein sequence, read N- to C-terminus: Ankyrin repeat domain-containing protein SOWAHC (512 aa).

S82 and S125 each carry phosphoserine. The interval 126 to 248 (LGLGGEVSDQ…AEEESSVGAS (123 aa)) is disordered. A compositionally biased stretch (low complexity) spans 173–186 (PPQGEAEGGSSPSG). A Phosphoserine modification is found at S205. Gly residues predominate over residues 214 to 228 (PGDGNAGGRSRGGGD). Over residues 229–248 (SDTASLASSSAEEESSVGAS) the composition is skewed to low complexity. ANK repeat units lie at residues 288–317 (TGFTCLHWAAKHGRQELLAMLVNFATKHQL) and 327–357 (GGYTALHLAAMHGHVEVVKLLVGAYDADVDI). An Omega-N-methylarginine modification is found at R395. The segment at 427–500 (HVPEGWTGGS…EERSLRGYSS (74 aa)) is disordered. Positions 453–462 (MKPRLNKIRF) are enriched in basic residues. Residues 481 to 492 (EEGEEEEEEEEE) show a composition bias toward acidic residues.

It belongs to the SOWAH family.

The chain is Ankyrin repeat domain-containing protein SOWAHC (Sowahc) from Mus musculus (Mouse).